The following is a 116-amino-acid chain: Class I hydrophobin 1 (116 aa).

The N-terminal stretch at 1–19 is a signal peptide; the sequence is MLFKQAILVATTLTTLAVA. 4 disulfides stabilise this stretch: C35/C95, C42/C89, C43/C76, and C96/C109. N44 and N100 each carry an N-linked (GlcNAc...) asparagine glycan.

It belongs to the fungal hydrophobin family. As to quaternary structure, self-assembles to form functional amyloid fibrils called rodlets. Self-assembly into fibrillar rodlets occurs spontaneously at hydrophobic:hydrophilic interfaces and the rodlets further associate laterally to form amphipathic monolayers.

Its subcellular location is the secreted. It localises to the cell wall. In terms of biological role, aerial growth, conidiation, and dispersal of filamentous fungi in the environment rely upon a capability of their secreting small amphipathic proteins called hydrophobins (HPBs) with low sequence identity. Class I can self-assemble into an outermost layer of rodlet bundles on aerial cell surfaces, conferring cellular hydrophobicity that supports fungal growth, development and dispersal; whereas Class II form highly ordered films at water-air interfaces through intermolecular interactions but contribute nothing to the rodlet structure. In Pleurotus ostreatus (strain PC15) (Oyster mushroom), this protein is Class I hydrophobin 1.